A 497-amino-acid polypeptide reads, in one-letter code: Glycerol kinase (497 aa).

Residue T12 coordinates ADP. ATP is bound by residues T12, T13, and S14. Residue T12 participates in sn-glycerol 3-phosphate binding. R16 contacts ADP. Sn-glycerol 3-phosphate-binding residues include R82, E83, Y134, and D243. Residues R82, E83, Y134, D243, and Q244 each contribute to the glycerol site. ADP contacts are provided by T265 and G308. T265, G308, Q312, and G409 together coordinate ATP. ADP contacts are provided by G409 and N413.

Belongs to the FGGY kinase family.

It catalyses the reaction glycerol + ATP = sn-glycerol 3-phosphate + ADP + H(+). It functions in the pathway polyol metabolism; glycerol degradation via glycerol kinase pathway; sn-glycerol 3-phosphate from glycerol: step 1/1. With respect to regulation, inhibited by fructose 1,6-bisphosphate (FBP). Key enzyme in the regulation of glycerol uptake and metabolism. Catalyzes the phosphorylation of glycerol to yield sn-glycerol 3-phosphate. The sequence is that of Glycerol kinase from Oleidesulfovibrio alaskensis (strain ATCC BAA-1058 / DSM 17464 / G20) (Desulfovibrio alaskensis).